Reading from the N-terminus, the 854-residue chain is MAIKSTEKHTPMMQQYLRLKSENPDILLFYRMGDFYELFYDDAKRASQLLEISLTKRGSSAGEPIPMAGIPYHAVEGYLAKLVQQGESVAICEQVGDPATSKGPVERKVVRIVTPGTVTDEALLPERFDNLIAAIYHHKGQFGYATLDITSGRFKVSEPNTEEAMLAELQRTAPTELLFSEDFEPVHLLEKRNGNRRRPVWEFELDTAKQQLNNQFGTRDLVGFGVEKAEFGLCAAGCLIQYVKDTQRTTLPHIRSIIMDHQDDSVILDAATRRNLEITQNLAGGFNHTLAEILDHTSTAMGSRLLKRWLHQPVRTHDVLNQRLDAIGELKESGLFADMAPQLKNIGDVERILARLALRSARPRDLARLRNALQQLPELSQTTQEFQQDHLLTLAASAQPIDSICELLERAIKENPPVVIRDGGVLADGYNEELDQWRDLANGATQYLEKLEQEERERHDIDTLKVGYNNVHGFYIQISKGQSHKAPAHYVRRQTLKNAERYIIPELKEHEDKVLNSKSKALAIEKRLWEELFDQLLPHLEQLQSMANAISELDVLSNLAERADTLNYCRPVLTKETGINIEGGRHPVVEQVMSDPFIANPIKLNPDRKMLIITGPNMGGKSTYMRQTALIALMAHVGCYVPADSAEIGTLDRIFTRIGASDDLASGRSTFMVEMTETANILHNATKHSLVLMDEIGRGTSTYDGLSLAWASAEWLATKINAMTLFATHYFELTELPNLFTGLANVHLDAVEHGDEIAFMHAVQEGAANKSYGLAVASLAGVPKSVIKKAKQKLQHLESGQVPVPATSTTVKEEHQLSLIPEISEVEEALAHVNPDDLTPRQALEELYRLKALL.

Residue 615-622 (GPNMGGKS) participates in ATP binding.

This sequence belongs to the DNA mismatch repair MutS family.

This protein is involved in the repair of mismatches in DNA. It is possible that it carries out the mismatch recognition step. This protein has a weak ATPase activity. The chain is DNA mismatch repair protein MutS from Aliivibrio fischeri (strain ATCC 700601 / ES114) (Vibrio fischeri).